Consider the following 435-residue polypeptide: Histidine--tRNA ligase (435 aa).

This sequence belongs to the class-II aminoacyl-tRNA synthetase family. Homodimer.

It localises to the cytoplasm. It catalyses the reaction tRNA(His) + L-histidine + ATP = L-histidyl-tRNA(His) + AMP + diphosphate + H(+). The chain is Histidine--tRNA ligase from Synechococcus sp. (strain ATCC 27144 / PCC 6301 / SAUG 1402/1) (Anacystis nidulans).